The chain runs to 470 residues: Small ribosomal subunit protein bS1m (470 aa).

Residues 436-470 (FKKIPMTAARLRGRYENSDSPSSPTMSGSSGYGLR) form a disordered region. Over residues 453 to 464 (SDSPSSPTMSGS) the composition is skewed to low complexity.

It belongs to the bacterial ribosomal protein bS1 family. In terms of assembly, component of the mitochondrial small ribosomal subunit (mt-SSU). Mature N.crassa 74S mitochondrial ribosomes consist of a small (37S) and a large (54S) subunit. The 37S small subunit contains a 16S ribosomal RNA (16S mt-rRNA) and 32 different proteins. The 54S large subunit contains a 23S rRNA (23S mt-rRNA) and 42 different proteins.

Its subcellular location is the mitochondrion. In terms of biological role, component of the mitochondrial ribosome (mitoribosome), a dedicated translation machinery responsible for the synthesis of mitochondrial genome-encoded proteins, including at least some of the essential transmembrane subunits of the mitochondrial respiratory chain. The mitoribosomes are attached to the mitochondrial inner membrane and translation products are cotranslationally integrated into the membrane. This Neurospora crassa (strain ATCC 24698 / 74-OR23-1A / CBS 708.71 / DSM 1257 / FGSC 987) protein is Small ribosomal subunit protein bS1m (mrp51).